Reading from the N-terminus, the 170-residue chain is MVRKPAKMYRNLAKKAYTRREYMGGVPGSKIVQFDMGNLTEDYPVELSIVVDETCQIRHTALEAARIGINRQLQKEVGRANFHLKIRTFPHHVLRENKQATGAGADRVSEGMRLAFGKAVGTAARVEKGQKVFSVWTSPQYVDKAKVSLKRGIYKLPTPARIVEERAPAA.

It belongs to the universal ribosomal protein uL16 family.

This chain is Large ribosomal subunit protein uL16, found in Methanoculleus marisnigri (strain ATCC 35101 / DSM 1498 / JR1).